The following is a 485-amino-acid chain: MGPVMPPSKKPESPGISVSSGLSQCYRGSSFSKALQEDDDLDFSLPDIRLEEGAMEDEELTNLNWLHESKNLLKSFGDSVLRSVSPVQDLDDDTPPSPAHSDMPYDARQNPNCKPPYSFSCLIFMAIEDSPTKRLPVKDIYNWILEHFPYFANAPTGWKNSVRHNLSLNKCFKKVDKERSQSIGKGSLWCIDPEYRQNLIQALKKTPYHSHSNVFNTPPASPQAYQSTSGPPIWPGSTFFKRNGALLQDPDIDAASAMMLLNTPPEIQAGFPPGVIQNGARVLSRGLFPGVRPLPITPIGMTAAVRNGLTSCRMRTESEPSCGSPVVSGDPKEDHNYSSAKSSHARSTSPASDCVSSSSADDHYEFATKGGQEGSEGSFQSHESHSETEEDDRKCSPKEAKDALGDSGYASQHKKRQHFAKARKVPSDTLPLKKRRTEKPPESDDEEMKEAAGSLLHLAGIRSCLNNITNRTAKGQKEQKETTKN.

Positions 1–21 are disordered; the sequence is MGPVMPPSKKPESPGISVSSG. A phosphoserine mark is found at Ser-83, Ser-85, and Ser-97. The interval 86–108 is disordered; it reads PVQDLDDDTPPSPAHSDMPYDAR. A DNA-binding region (fork-head) is located at residues 114-210; the sequence is KPPYSFSCLI…QALKKTPYHS (97 aa). Residues 315–454 form a disordered region; it reads RTESEPSCGS…DEEMKEAAGS (140 aa). The span at 338 to 359 shows a compositional bias: low complexity; the sequence is SSAKSSHARSTSPASDCVSSSS. Over residues 382 to 404 the composition is skewed to basic and acidic residues; it reads HESHSETEEDDRKCSPKEAKDAL. Over residues 412-424 the composition is skewed to basic residues; the sequence is QHKKRQHFAKARK. The residue at position 443 (Ser-443) is a Phosphoserine.

As to quaternary structure, interacts through its C-terminus with the C-terminus of SNW1/SKIP.

The protein resides in the nucleus. Its function is as follows. Acts as a transcriptional repressor. May be involved in DNA damage-inducible cell cycle arrests (checkpoints). This chain is Forkhead box protein N3 (FOXN3), found in Sus scrofa (Pig).